The primary structure comprises 123 residues: MEKSPPETAAAAAEVAARFRSLVDTGDIGAIRQTQHLILGRLQDSNAVLTHFNEYSEQCFAEVSNDFASKTRLLKSMKDDLDHIFLKLRSMKSRLAATYPDAFPDGAMAKTMDQRPDLESPLD.

A KxDL motif is present at residues 78–81 (KDDL).

This sequence belongs to the KXD1 family. Homodimer. Component of a nuclear cell elongation controlling complex made of ILI5/BUL1, LO9-177 and BC1. Binds directly to ILI5/BUL1, ILI4/BU1, BUL2 and BUL3. Binds to BC1 in the nucleus. Interacts with BCL1.

It localises to the nucleus. The protein localises to the cytoplasm. Functionally, contributes, together with ILI5/BUL1 and BC1, to the promotion of leaf inclination and grain size by modulating cell elongation. The polypeptide is KxDL motif-containing protein LO9-177 (Oryza sativa subsp. indica (Rice)).